We begin with the raw amino-acid sequence, 1403 residues long: DNA-directed RNA polymerase subunit beta' (1403 aa).

Zn(2+)-binding residues include cysteine 70, cysteine 72, cysteine 85, and cysteine 88. The Mg(2+) site is built by aspartate 461, aspartate 463, and aspartate 465. Zn(2+) contacts are provided by cysteine 816, cysteine 890, cysteine 897, and cysteine 900.

It belongs to the RNA polymerase beta' chain family. The RNAP catalytic core consists of 2 alpha, 1 beta, 1 beta' and 1 omega subunit. When a sigma factor is associated with the core the holoenzyme is formed, which can initiate transcription. Requires Mg(2+) as cofactor. Zn(2+) is required as a cofactor.

The enzyme catalyses RNA(n) + a ribonucleoside 5'-triphosphate = RNA(n+1) + diphosphate. Its function is as follows. DNA-dependent RNA polymerase catalyzes the transcription of DNA into RNA using the four ribonucleoside triphosphates as substrates. The chain is DNA-directed RNA polymerase subunit beta' from Dechloromonas aromatica (strain RCB).